The chain runs to 89 residues: Teretoxin Tan6.8 (89 aa).

A signal peptide spans 1–21 (MRLLLILLLLTPVILAGSLDE). The interval 22-42 (EPNNADGANAASFTADQEGRH) is disordered. A propeptide spanning residues 22–44 (EPNNADGANAASFTADQEGRHKR) is cleaved from the precursor.

Post-translationally, contains 3 disulfide bonds. As to expression, expressed by the venom duct.

It localises to the secreted. The chain is Teretoxin Tan6.8 from Terebra anilis (Auger snail).